We begin with the raw amino-acid sequence, 269 residues long: Phosphatidylglycerol--prolipoprotein diacylglyceryl transferase (269 aa).

7 helical membrane-spanning segments follow: residues Val-10–Ile-30, Met-56–Tyr-76, Trp-92–Phe-112, Phe-120–Ile-140, Pro-174–Phe-194, Met-202–Val-222, and Leu-237–Leu-257. Arg-139 provides a ligand contact to a 1,2-diacyl-sn-glycero-3-phospho-(1'-sn-glycerol).

This sequence belongs to the Lgt family.

It is found in the cell inner membrane. It carries out the reaction L-cysteinyl-[prolipoprotein] + a 1,2-diacyl-sn-glycero-3-phospho-(1'-sn-glycerol) = an S-1,2-diacyl-sn-glyceryl-L-cysteinyl-[prolipoprotein] + sn-glycerol 1-phosphate + H(+). Its pathway is protein modification; lipoprotein biosynthesis (diacylglyceryl transfer). Its function is as follows. Catalyzes the transfer of the diacylglyceryl group from phosphatidylglycerol to the sulfhydryl group of the N-terminal cysteine of a prolipoprotein, the first step in the formation of mature lipoproteins. This Pseudomonas fluorescens (strain ATCC BAA-477 / NRRL B-23932 / Pf-5) protein is Phosphatidylglycerol--prolipoprotein diacylglyceryl transferase.